The sequence spans 221 residues: Ras-related protein Rab-27A (221 aa).

At S2 the chain carries N-acetylserine. S2 bears the Phosphoserine mark. 16–24 serves as a coordination point for GTP; it reads GDSGVGKTS. The short motif at 38–46 is the Effector region element; that stretch reads FITTVGIDF. GTP is bound by residues 74–78, 133–136, and 163–165; these read DTAGQ, NKSD, and SAA. Cysteines 123 and 188 form a disulfide. 2 S-geranylgeranyl cysteine lipidation sites follow: C219 and C221. A Cysteine methyl ester modification is found at C221.

It belongs to the small GTPase superfamily. Rab family. As to quaternary structure, binds SYTL1, SLAC2B, MYRIP, SYTL3, SYTL4 and SYTL5. Interacts with RPH3A and RPH3A. Binds MLPH and SYTL2. Interacts with UNC13D. Does not interact with the BLOC-3 complex (heterodimer of HPS1 and HPS4). Interacts (GDP-bound form preferentially) with DENND10.

Its subcellular location is the membrane. The protein resides in the melanosome. It is found in the late endosome. The protein localises to the lysosome. It catalyses the reaction GTP + H2O = GDP + phosphate + H(+). Regulated by guanine nucleotide exchange factors (GEFs) which promote the exchange of bound GDP for free GTP, GTPase activating proteins (GAPs) which increase the GTP hydrolysis activity, and GDP dissociation inhibitors which inhibit the dissociation of the nucleotide from the GTPase. Activated by GEFs such as DENND10. In terms of biological role, small GTPase which cycles between active GTP-bound and inactive GDP-bound states. In its active state, binds to a variety of effector proteins to regulate homeostasis of late endocytic pathway, including endosomal positioning, maturation and secretion. Plays a role in cytotoxic granule exocytosis in lymphocytes. Required for both granule maturation and granule docking and priming at the immunologic synapse. In Canis lupus familiaris (Dog), this protein is Ras-related protein Rab-27A (RAB27A).